The primary structure comprises 347 residues: NADH-ubiquinone oxidoreductase chain 2 (347 aa).

10 helical membrane-spanning segments follow: residues 26 to 46 (WLLAWMGLEMNMLAMIPILTM), 60 to 80 (FLTQATASMLLMMAIMINFML), 96 to 116 (SMALAALMMKLGLAPFHFWVP), 123 to 143 (SLTSGMILLTWQKLAPLSILY), 151 to 171 (ITILTVSGLLSILVGGWGGLN), 178 to 198 (ILAYSSIAHMGWMLIIMPYNP), 200 to 220 (LTILNLLIYILMTLSIFMIMM), 240 to 260 (MMILLTITLLSLGGLPPLSGF), 274 to 294 (DSIILPMSMAMFALLNLYFYM), and 325 to 345 (LLPPLIILSTLTLPLTPFLSI).

Belongs to the complex I subunit 2 family. Core subunit of respiratory chain NADH dehydrogenase (Complex I) which is composed of 45 different subunits. Interacts with TMEM242.

It is found in the mitochondrion inner membrane. It catalyses the reaction a ubiquinone + NADH + 5 H(+)(in) = a ubiquinol + NAD(+) + 4 H(+)(out). Functionally, core subunit of the mitochondrial membrane respiratory chain NADH dehydrogenase (Complex I) which catalyzes electron transfer from NADH through the respiratory chain, using ubiquinone as an electron acceptor. Essential for the catalytic activity and assembly of complex I. This Dugong dugon (Dugong) protein is NADH-ubiquinone oxidoreductase chain 2.